Consider the following 313-residue polypeptide: Pseudouridine kinase (313 aa).

This sequence belongs to the carbohydrate kinase PfkB family.

The catalysed reaction is pseudouridine + ATP = psi-UMP + ADP + H(+). Catalyzes the phosphorylation of pseudouridine to pseudouridine 5'-phosphate (PsiMP). In Escherichia coli (strain K12), this protein is Pseudouridine kinase (psuK).